A 62-amino-acid polypeptide reads, in one-letter code: MPIINVKLLEGRSDEQLKNLVTEVTNAVEKTTGANREAIHVIIEEMQKNHYGVAGVRKSDAE.

P2 (proton acceptor; via imino nitrogen) is an active-site residue.

The protein belongs to the 4-oxalocrotonate tautomerase family.

In Staphylococcus haemolyticus (strain JCSC1435), this protein is Probable tautomerase SH1546.